A 5495-amino-acid chain; its full sequence is Microtubule-associated protein futsch (5495 aa).

Disordered stretches follow at residues 1 to 97 (MGDQ…DADG), 656 to 975 (AKAD…LKEE), 988 to 1074 (RDEM…AEEE), 1086 to 1111 (ERKARLEGASARQDESELDVEPEQSK), 1128 to 1167 (KSRTEEQLAKPAEEELSSPTPEEKLSKKTSDTKDDQIGAP), 1185 to 1204 (SATIESGATTAPTLPEDERI), 1255 to 1275 (KDAPKDANAEALGELPDSGER), 1306 to 1358 (HEEA…EPNK), 1402 to 1840 (NQED…VVES), 1866 to 2631 (EIGK…PGFV), 2709 to 2810 (AKTV…KDFA), 2830 to 4166 (LPTL…DLSL), 4196 to 4230 (KAESSPRPAVLSKPAEFSQPDTGHTASTPVDEASP), 4362 to 4612 (IIPD…ASQL), 4636 to 4668 (AQKSNKEIKDARETKVTSQFTTTTSSATKDDSL), 4687 to 4975 (AFST…QMLA), 5035 to 5065 (KTVTTTDSSEPDSEKVVVTTTRTTSESERDQ), 5101 to 5138 (SYELQHSSSGVSKRSDLDADGDESQDDIPPQYGSEEHS), 5170 to 5199 (PSTEPIPIQGAPSGDSQSSESVESSSQTWA), and 5328 to 5350 (GLPSPAPLPVEGGADIRTTPKKE). The span at 35-48 (AKGAGDGPAQDAAQ) shows a compositional bias: low complexity. Composition is skewed to basic and acidic residues over residues 656-672 (AKADSMDTDAEPEHEAD), 696-716 (EPEHEPEAEQDKDVGEEKKVE), and 758-795 (GKADKPRAEVKPVVRSRIDTKPPKSMDRKLAKRDEKKS). Low complexity-rich tracts occupy residues 797 to 806 (PTTTPAARAP) and 819 to 831 (PATKSSPSSTPAK). Over residues 832–843 (SAKEANNRKVLE) the composition is skewed to basic and acidic residues. Residues 850 to 888 (RVQATSTVSRRVTSTASERRVQQQAEAKTAATGATQATQ) are compositionally biased toward low complexity. Residues 918–931 (KAADLKKTRLDKGG) show a composition bias toward basic and acidic residues. Residues 932–942 (TTDSSLVSTPS) show a composition bias toward polar residues. 2 stretches are compositionally biased toward basic and acidic residues: residues 962-975 (DAEKQRELDDLKEE) and 988-1007 (RDEMKRQQHQQIKAELREMP). Over residues 1012-1041 (GDGENEPDEEEEYLIIEKEEVEQYTEDSIV) the composition is skewed to acidic residues. The segment covering 1047-1065 (MTKEEEIQKHQRDSQESEK) has biased composition (basic and acidic residues). 2 stretches are compositionally biased toward basic and acidic residues: residues 1128-1140 (KSRTEEQLAKPAE) and 1148-1163 (PEEKLSKKTSDTKDDQ). Polar residues predominate over residues 1187 to 1196 (TIESGATTAP). Basic and acidic residues-rich tracts occupy residues 1306 to 1319 (HEEADLGLYEKDSQ), 1327 to 1337 (SHKEESAKEEK), 1343 to 1358 (KENKVGEIELGDEPNK), and 1408 to 1443 (EQVKDKEEHEQKIESGIITEKEAKKSASTPEEKETS). Repeat copies occupy residues 1469-1502 (REDTGSIESPPTIEEAIEVEVQAKQEAQKPVPAP) and 1513-1539 (LASKETSRPESATGSVKEDTEQTKSKK). A 53 X approximate repeat region spans residues 1469 to 4032 (REDTGSIESP…SPLASKESSR (2564 aa)). Basic and acidic residues-rich tracts occupy residues 1546-1555 (PESEAKDKKS), 1571-1663 (SVKD…DEKS), 1679-1696 (SVKDETEKSKEPSRRESI), 1718-1732 (GIKDESAKPESRRDS), and 1748-1779 (SVKDEPIKSTEKSRRESVAESFKADSTKDEKS). 17 repeat units span residues 1622–1649 (KSALASKEASRPESVTDKSKEPSRRESI), 1660–1686 (DEKSAPPSKEASRPGSVVESVKDETEK), 1690–1718 (PSRRESIAESAKPPIEFREVSRPESVIDG), 1755–1782 (KSTEKSRRESVAESFKADSTKDEKSPLT), 1790–1818 (ESAVENVMDAVGSAERSQPESVTASRDVS), 1837–1865 (VVESVIPASDVVEIEKGAADKEKGVFVSL), 1874–1902 (SEVISRPGPVVESVKPESRRESSTEIVLP), 1911–1939 (PSRPESKVECLKDESEVLKGSTRRESVAE), 1948–1976 (KETSRPESAVGSMKDESMSKEPSRRESVK), 1985–2013 (TSRPASVAESAKDGADDLKELSRPESTTQ), 2022–2050 (DEKSPLASEEASRPASVAESVKDEAEKSK), 2059–2087 (AEKSPLPSKEASRPASVAESIKDEAEKSK), 2096–2124 (AEKSPLPSKEASRPASVAESIKDEAEKSK), 2133–2161 (AEKSPLPSKEASRPASVAESIKDEAEKSK), 2170–2198 (AEKSPLPSKEASRPASVAESIKDEAEKSK), 2215–2243 (KEASRPASVAESIKDEAEKSKEESRRESV), and 2262–2292 (ESIKDEAEKSKEESRRESVAEKSPLPSKEAS). The span at 1804 to 1815 (ERSQPESVTASR) shows a compositional bias: polar residues. Composition is skewed to basic and acidic residues over residues 1887–1896 (VKPESRRESS), 1904–1942 (HAEDSKEPSRPESKVECLKDESEVLKGSTRRESVAESDK), 1960–1976 (MKDESMSKEPSRRESVK), 1994–2007 (SAKDGADDLKELSR), 2041–2059 (SVKDEAEKSKEESRRESVA), 2078–2096 (SIKDEAEKSKEESRRESVA), 2115–2133 (SIKDEAEKSKEESRRESVA), 2152–2170 (SIKDEAEKSKEESRRESVA), 2189–2207 (SIKDEAEKSKEESRRESVA), 2226–2244 (SIKDEAEKSKEESRRESVA), 2263–2281 (SIKDEAEKSKEESRRESVA), 2300–2318 (SIKDEAEKSKEETRRESVA), 2337–2355 (SIKDEAEKSKEESRRESAA), 2374–2391 (SVKDEADKSKEESRRESM), 2419–2435 (SVKDDPVKSKEPSRRES), 2466–2482 (SVKDEAEKQESRRESKT), 2560–2588 (IKYDLDKPQIIKDDKSTEHSRRESLEDKS), and 2604–2627 (SDHEAAVAIEDDAKSSISPKDKSR). The stretch at 2355–2391 (AEKSPLPSKEASRPASVAESVKDEADKSKEESRRESM) is repeat 20. 2 repeat units span residues 2703-2726 (LAQIGAAKTVSSPLDEALRTPSAP) and 2761-2787 (WVAESKDDAAQLKSSVEDLRSPVASTE). The span at 2764–2780 (ESKDDAAQLKSSVEDLR) shows a compositional bias: basic and acidic residues. Serine 2800 carries the phosphoserine; by GSK3-beta modification. Repeat copies occupy residues 2820–2846 (LPLTIELKGNLPTLSSPVDVAHGDFPQ), 2864–2892 (LSKVDIEKTASSPIDEAPKSLIGCPAEER), and 2907–2933 (VEKSKDASRPPSVVESTKADSTKGDIS). A compositionally biased stretch (low complexity) spans 2845–2861 (PQTSTPTSSPTVASVQP). Composition is skewed to basic and acidic residues over residues 2889-2914 (AEERPESPAESAKDAAESVEKSKDAS) and 2942-2954 (GPKDDVEKSKESS). A compositionally biased stretch (polar residues) spans 2955–2966 (RPPSVSASITGD). A run of 28 repeats spans residues 2956-2987 (PPSVSASITGDSTKDVSRPASVVESVKDEHDK), 3006-3034 (GKSDSKSSSQDSQKDEKSTLASKEASRRE), 3049-3075 (SRPESVIASGEPVPRESKSPLDSKDTS), 3089-3117 (EKSEQQSRRESVAESVKADTKKDGKSQEA), 3131-3158 (DEKQESRRQSITGSHKAMSTMGDESPMD), 3200-3224 (KSDITKGEKSPLPSKEVSRPESVVG), 3228-3256 (DEKAESRRESVAESVKPESSKDATSAPPS), 3265-3293 (VLGSLKDEGDKTTSRRVSVADSIKDEKSL), 3302-3330 (PESEAESLKDAAAPSQETSRPESVTESVK), 3339-3367 (KEASRPASVAENAKDSADESKEQRPESLP), 3376-3404 (DEKSPLASKDEAEKSKEESRRESVAEQFP), 3413-3441 (PASVAESVKDEAEKSKEESPLMSKEASRP), 3450-3478 (DEAEKSKEESRRESVAEKSPLPSKEASRP), 3487-3515 (DEADKSKEESRRESGAEKSPLASKEASRP), 3524-3552 (DEAEKSKEESRRESVAEKSPLPSKEASRP), 3561-3589 (DEAEKSKEESRRDSVAEKSPLASKEASRP), 3598-3626 (DEAEKSKEESRRESVAEKSPLASKEASRP), 3635-3663 (DEAEKSKEESRRESVAEKSPLASKEASRP), 3672-3700 (DEAEKSKEESSRDSVAEKSPLASKEASRP), 3709-3737 (DEAEKSKEESRRESVAEKSPLASKEASRP), 3746-3774 (DDAEKSKEESRRESVAEKSPLASKEASRP), 3783-3811 (DEAEKSKEESRRESVAEKSPLPSKEASRP), 3820-3848 (DEAEKSKEESRRESVAEKSSLASKKASRP), 3867-3894 (RRESVAEKSPLASKEASRPASVAESVKD), 3895-3921 (EAEKSKEESRRESVAEKSPLPSKEASR), 3931-3958 (DEADKSKEESRRESGAEKSPLASMEASR), 3968-3995 (DETEKSKEESRRESVTEKSPLPSKEASR), and 4005-4032 (DEAEKSKEESRRESVAEKSPLASKESSR). Basic and acidic residues-rich tracts occupy residues 2980–2996 (SVKDEHDKAESRRESIA), 3017–3051 (SQKDEKSTLASKEASRRESVVESSKDDAEKSESRP), 3061–3075 (VPRESKSPLDSKDTS), 3087–3116 (EDEKSEQQSRRESVAESVKADTKKDGKSQE), 3156–3168 (PMDKADKSKEPSR), 3175–3208 (SIKHENTKDEESPLGSRRDSVAESIKSDITKGEK), and 3226–3248 (IKDEKAESRRESVAESVKPESSK). Serine 3067, serine 3071, and serine 3075 each carry phosphoserine. The span at 3300–3310 (SRPESEAESLK) shows a compositional bias: basic and acidic residues. The segment covering 3316 to 3327 (SQETSRPESVTE) has biased composition (polar residues). Basic and acidic residues-rich tracts occupy residues 3350 to 3363 (NAKDSADESKEQRP), 3373 to 3399 (SIKDEKSPLASKDEAEKSKEESRRESV), 3419 to 3431 (SVKDEAEKSKEES), 3448 to 3465 (VKDEAEKSKEESRRESVA), 3484 to 3502 (SVKDEADKSKEESRRESGA), 3521 to 3539 (SIKDEAEKSKEESRRESVA), 3558 to 3576 (SVKDEAEKSKEESRRDSVA), 3599 to 3613 (EAEKSKEESRRESVA), 3632 to 3650 (SIKDEAEKSKEESRRESVA), 3669 to 3687 (SVKDEAEKSKEESSRDSVA), 3710 to 3724 (EAEKSKEESRRESVA), 3743 to 3761 (SVKDDAEKSKEESRRESVA), 3780 to 3798 (SVKDEAEKSKEESRRESVA), and 3817 to 3835 (SVKDEAEKSKEESRRESVA). A compositionally biased stretch (low complexity) spans 3836–3850 (EKSSLASKKASRPAS). Basic and acidic residues-rich tracts occupy residues 3854–3872 (SVKDEAEKSKEESRRESVA), 3891–3909 (SVKDEAEKSKEESRRESVA), 3928–3946 (SVKDEADKSKEESRRESGA), 3965–3983 (SVKDETEKSKEESRRESVT), 4002–4020 (SVKDEAEKSKEESRRESVA), 4039–4066 (SIKDEAEGTKQESRRESMPESGKAESIK), 4086–4095 (SVKDETEKPE), and 4115–4141 (AKDEKSPLHSRPESVADKSPDASKEAS). Polar residues-rich tracts occupy residues 4142–4152 (RSLSVAETASS) and 4214–4223 (QPDTGHTAST). Basic and acidic residues-rich tracts occupy residues 4362–4379 (IIPDFDERQLEEKLKSTA), 4386–4410 (DKSTRDEKSLEISVKVEIESEKSSP), and 4419–4432 (IEEKDKIEQSEKAQ). Residues 4443–4461 (PESVASQPESVPSPSQSAA) are compositionally biased toward low complexity. Positions 4462-4481 (SHEHKEVELSESHKAEKSSR) are enriched in basic and acidic residues. Residues 4498–4508 (RPASSTSQFST) are compositionally biased toward polar residues. Low complexity predominate over residues 4517–4528 (ESLLHSLTTTET). Over residues 4529-4539 (VETKQMEEKSS) the composition is skewed to basic and acidic residues. Over residues 4540–4560 (FESVSTSVTKSTVLSSQSTVQ) the composition is skewed to low complexity. Basic and acidic residues-rich tracts occupy residues 4575 to 4584 (KVEDSSRRES) and 4639 to 4650 (SNKEIKDARETK). Composition is skewed to low complexity over residues 4651-4662 (VTSQFTTTTSSA) and 4703-4714 (TTASAVSSTSAS). Residues 4744-4754 (PEDEEPADDVD) show a composition bias toward acidic residues. Composition is skewed to basic and acidic residues over residues 4755–4764 (ERSSVKESRS) and 4788–4798 (LVEEEHEHVEE). Residues 4804-4829 (TSTSKTTTLLQSSEQSSTTTSSTSKT) show a composition bias toward low complexity. The span at 4835–4851 (ESITLTQMDQQTSQSQG) shows a compositional bias: polar residues. Residues 4875 to 4905 (GSAGSVIGAGAGAVAAGGKCESSAASIVSSS) show a composition bias toward low complexity. A compositionally biased stretch (polar residues) spans 4915–4930 (GKSSPGALTSESQSIP). Serine 4950 carries the phosphoserine; by GSK3-beta modification. Positions 4955 to 4970 (VSKDELKSLEMQHHSQ) are enriched in basic and acidic residues. Residues 5101-5112 (SYELQHSSSGVS) show a composition bias toward polar residues. Over residues 5185 to 5196 (SQSSESVESSSQ) the composition is skewed to low complexity.

In terms of assembly, heterodimer of a heavy and a light chain. Interacts with Fmr1. Found in a complex with tubulin and Futsch. Several minor light chains can be created with markedly different pIs. In terms of processing, phosphorylated by SGG/GSK3. Phosphorylated by LRRK2 at the presynapse of neuromuscular junctions, which negatively regulates the activity controlling synaptic differentiation. As to expression, neuronal cells within the PNS and CNS.

Its subcellular location is the cytoplasm. It is found in the cytoskeleton. Functionally, during embryogenesis, necessary for dendritic and axonal organization and growth at the neuromuscular junction through the regulation of the synaptic microtubule cytoskeleton. Microtubule hairpin loops are found within a small subset of synaptic boutons at the neuromuscular synapse, these loops are stabilized by futsch. Loop morphology and dynamics suggest that rearrangement of these microtubule-based loops is a critical component of the process of bouton division and for subsequent nerve-terminal growth and branching. Translation is repressed by Fmr1. Together with ringer, required for neuromuscular junction (NMJ) bouton growth by regulating synaptic microtubules. Function with ringer in maintaining microtubule stability and dynamics, is essential for promoting axon regeneration in response to peripheral (PNS) and central nervous system (CNS) injury. In response to axotomy, acts downstream of a stress response cascade involving Xbp1 splicing, to control axon regeneration. The protein is Microtubule-associated protein futsch (futsch) of Drosophila melanogaster (Fruit fly).